Consider the following 361-residue polypeptide: Chorismate synthase (361 aa).

Arg-48 is a binding site for NADP(+). Residues 126–128 (RSS), Gly-269, 302–306 (KPVPS), and Asn-328 each bind FMN.

It belongs to the chorismate synthase family. As to quaternary structure, homotetramer. FMNH2 serves as cofactor.

It catalyses the reaction 5-O-(1-carboxyvinyl)-3-phosphoshikimate = chorismate + phosphate. The protein operates within metabolic intermediate biosynthesis; chorismate biosynthesis; chorismate from D-erythrose 4-phosphate and phosphoenolpyruvate: step 7/7. In terms of biological role, catalyzes the anti-1,4-elimination of the C-3 phosphate and the C-6 proR hydrogen from 5-enolpyruvylshikimate-3-phosphate (EPSP) to yield chorismate, which is the branch point compound that serves as the starting substrate for the three terminal pathways of aromatic amino acid biosynthesis. This reaction introduces a second double bond into the aromatic ring system. The sequence is that of Chorismate synthase from Treponema denticola (strain ATCC 35405 / DSM 14222 / CIP 103919 / JCM 8153 / KCTC 15104).